Consider the following 158-residue polypeptide: MRMEAQVVAVSPHGVVLPLGVAKVMEVHPLGAVLAAVPQLGAAKVLVLLLLGVVLQPGVTNQVGAVHPLGRRVVNLMVPCLLGVVPVIGQPTAGLPPGEEITIIKVQEMAELLHGVTKTMEIGLLGTTKEISQTMVVTVHGEVINHQKENQYHPRRNQ.

Residues 33-53 (VLAAVPQLGAAKVLVLLLLGV) form a helical membrane-spanning segment.

The protein localises to the membrane. This is an uncharacterized protein from Saccharomyces cerevisiae (strain ATCC 204508 / S288c) (Baker's yeast).